Here is a 424-residue protein sequence, read N- to C-terminus: Tyrosine--tRNA ligase (424 aa).

Tyr36 contributes to the L-tyrosine binding site. The short motif at 41-50 is the 'HIGH' region element; sequence PTAPSLHAGH. L-tyrosine-binding residues include Tyr171 and Gln175. A 'KMSKS' region motif is present at residues 231-235; it reads KFGKS. ATP is bound at residue Lys234. Positions 356 to 413 constitute an S4 RNA-binding domain; the sequence is DGIVDLLVASGLSASKGAARRTIHEGGVSVNNIRVDNEEWVPQSSDFLHGRWLVLRRG.

The protein belongs to the class-I aminoacyl-tRNA synthetase family. TyrS type 1 subfamily. As to quaternary structure, homodimer.

It is found in the cytoplasm. The enzyme catalyses tRNA(Tyr) + L-tyrosine + ATP = L-tyrosyl-tRNA(Tyr) + AMP + diphosphate + H(+). Its function is as follows. Catalyzes the attachment of tyrosine to tRNA(Tyr) in a two-step reaction: tyrosine is first activated by ATP to form Tyr-AMP and then transferred to the acceptor end of tRNA(Tyr). This is Tyrosine--tRNA ligase from Mycobacterium bovis (strain ATCC BAA-935 / AF2122/97).